The sequence spans 183 residues: Bifunctional protein PyrR (183 aa).

Residues 46–47 (TR), Arg-87, 107–115 (DDVIFSGRT), Arg-140, and Val-164 contribute to the substrate site. Residues 103-115 (VVLVDDVIFSGRT) carry the PRPP-binding motif.

This sequence belongs to the purine/pyrimidine phosphoribosyltransferase family. PyrR subfamily.

It catalyses the reaction UMP + diphosphate = 5-phospho-alpha-D-ribose 1-diphosphate + uracil. Its function is as follows. Regulates the transcription of the pyrimidine nucleotide (pyr) operon in response to exogenous pyrimidines. Functionally, also displays a weak uracil phosphoribosyltransferase activity which is not physiologically significant. This is Bifunctional protein PyrR from Thermosynechococcus vestitus (strain NIES-2133 / IAM M-273 / BP-1).